Reading from the N-terminus, the 265-residue chain is AT-hook motif nuclear-localized protein 18 (265 aa).

The disordered stretch occupies residues 1-75 (MDEVSRSHTP…AGSKNKPKAP (75 aa)). Positions 19–30 (HYHHQNAGRQKR) are enriched in basic residues. Positions 59–71 (RRPRGRPAGSKNK) form a DNA-binding region, a.T hook. Positions 83–217 (ANAFRCHVME…EEEETEREID (135 aa)) constitute a PPC domain.

The protein resides in the nucleus. Transcription factor that specifically binds AT-rich DNA sequences related to the nuclear matrix attachment regions (MARs). Acts redundantly with AHL22, AHL27 and AHL29 in the regulation of flowering and regulation of the hypocotyl elongation. This is AT-hook motif nuclear-localized protein 18 from Arabidopsis thaliana (Mouse-ear cress).